The primary structure comprises 249 residues: Phosphomannomutase 1 (249 aa).

Asp12 acts as the Nucleophile in catalysis. Residues Asp12 and Asp14 each contribute to the Mg(2+) site. Residue Asp14 is the Proton donor/acceptor of the active site. The alpha-D-mannose 1-phosphate site is built by Arg21, Arg123, Arg134, Arg141, Ser179, and Asp181. Residues Asp209, Asp223, and Thr227 each coordinate Mg(2+).

It belongs to the eukaryotic PMM family. In terms of assembly, homodimer.

It is found in the cytoplasm. The enzyme catalyses alpha-D-mannose 1-phosphate = D-mannose 6-phosphate. It functions in the pathway nucleotide-sugar biosynthesis; GDP-alpha-D-mannose biosynthesis; alpha-D-mannose 1-phosphate from D-fructose 6-phosphate: step 2/2. Its function is as follows. Involved in the synthesis of the GDP-mannose and dolichol-phosphate-mannose required for a number of critical mannosyl transfer reactions. This Dictyostelium discoideum (Social amoeba) protein is Phosphomannomutase 1 (pmmA).